A 190-amino-acid polypeptide reads, in one-letter code: MGSVAVEETIVTGMAGRYAQALFSLAKESGTIDQVASDLQRLREIYRESEDLQRFIGSPAFSSEIQVKVLNALLNKVEITGLAANFIKLVAFKRRLFGLPKMIDDFNHLRDVEYGIVRATVTSAAPLKDEQLETLKGVLAAQGGGKSVEIAAKVDPALIGGLIVQLGSRMVDGSLKTKLNAIRTRMKEVG.

The protein belongs to the ATPase delta chain family. F-type ATPases have 2 components, F(1) - the catalytic core - and F(0) - the membrane proton channel. F(1) has five subunits: alpha(3), beta(3), gamma(1), delta(1), epsilon(1). F(0) has three main subunits: a(1), b(2) and c(10-14). The alpha and beta chains form an alternating ring which encloses part of the gamma chain. F(1) is attached to F(0) by a central stalk formed by the gamma and epsilon chains, while a peripheral stalk is formed by the delta and b chains.

The protein resides in the cell inner membrane. Functionally, f(1)F(0) ATP synthase produces ATP from ADP in the presence of a proton or sodium gradient. F-type ATPases consist of two structural domains, F(1) containing the extramembraneous catalytic core and F(0) containing the membrane proton channel, linked together by a central stalk and a peripheral stalk. During catalysis, ATP synthesis in the catalytic domain of F(1) is coupled via a rotary mechanism of the central stalk subunits to proton translocation. In terms of biological role, this protein is part of the stalk that links CF(0) to CF(1). It either transmits conformational changes from CF(0) to CF(1) or is implicated in proton conduction. The protein is ATP synthase subunit delta of Beijerinckia indica subsp. indica (strain ATCC 9039 / DSM 1715 / NCIMB 8712).